The primary structure comprises 383 residues: 8-amino-7-oxononanoate synthase (383 aa).

A substrate-binding site is contributed by Arg21. Pyridoxal 5'-phosphate is bound at residue 108–109 (GY). Residue His133 coordinates substrate. The pyridoxal 5'-phosphate site is built by Ser179, His207, and Thr233. Lys236 carries the post-translational modification N6-(pyridoxal phosphate)lysine. Substrate is bound at residue Thr350.

The protein belongs to the class-II pyridoxal-phosphate-dependent aminotransferase family. BioF subfamily. As to quaternary structure, homodimer. Requires pyridoxal 5'-phosphate as cofactor.

It catalyses the reaction 6-carboxyhexanoyl-[ACP] + L-alanine + H(+) = (8S)-8-amino-7-oxononanoate + holo-[ACP] + CO2. Its pathway is cofactor biosynthesis; biotin biosynthesis. In terms of biological role, catalyzes the decarboxylative condensation of pimeloyl-[acyl-carrier protein] and L-alanine to produce 8-amino-7-oxononanoate (AON), [acyl-carrier protein], and carbon dioxide. The protein is 8-amino-7-oxononanoate synthase of Yersinia pseudotuberculosis serotype IB (strain PB1/+).